Reading from the N-terminus, the 342-residue chain is uncharacterized protein (342 aa).

Residues 3–173 (IAIRGGHNFL…LIGYLIAKGI (171 aa)) form the MurNAc-LAA domain.

To C.perfringens CPE1502.

This is an uncharacterized protein from Clostridium perfringens.